The sequence spans 142 residues: gSG7 salivary protein (142 aa).

A signal peptide spans 1–26 (MAVRMTVILPLAMALICLMQAEPATA). Disulfide bonds link Cys84-Cys139 and Cys107-Cys117.

Associates with activated host C3-convertase complex C3bBb (C3-CFB). Interacts with host properdin (CFP), a regulator of the alternate pathway of complement. Female salivary gland (at protein level).

It localises to the secreted. Functionally, salivary protein that potently inhibits the alternative pathway of complement system activation in the host while having no inhibitory effect on the classical or lectin pathways. Binds and stabilizes activated host C3-convertase complex C3bBb (C3-CFB) and inhibits its convertase activity. Enhances accumulation of C3bBb on immobilized properdin. The polypeptide is gSG7 salivary protein (Anopheles albimanus (New world malaria mosquito)).